A 1006-amino-acid polypeptide reads, in one-letter code: E3 ubiquitin-protein ligase MIB1 (1006 aa).

Residues 6–74 (NNRVMVEGVG…AYDLRILDSA (69 aa)) enclose the MIB/HERC2 1 domain. The ZZ-type zinc finger occupies 80-132 (HDGTMCDTCRQQPIIGIRWKCAECTNYDLCTVCYHGDKHHLRHRFYRITTPGS). Cys85, Cys88, Cys100, Cys103, Cys109, Cys112, His118, and His122 together coordinate Zn(2+). The region spanning 143–221 (SKKITARGIF…MSDLKCVQDA (79 aa)) is the MIB/HERC2 2 domain. Ser408 carries the phosphoserine modification. ANK repeat units follow at residues 430 to 460 (DLNEELVKAAANGDVAKVEDLLKRPDVDVNG), 463 to 492 (AGHTAMQAASQNGHVDILKLLLKQNVDVEA), 496 to 525 (DGDRAVHHAAFGDEGAVIEVLHRGSADLNA), 529 to 558 (RRQTPLHIAVNKGHLQVVKTLLDFGCHPSL), 562 to 591 (EGDTPLHDAISKKRDDILAVLLEAGADVTI), 595 to 627 (NGFNALHHAALRGNPSAMRVLLSKLPRPWIVDE), 631 to 661 (DGYTALHLAALNNHVEVAELLVHQGNANLDI), 665 to 694 (NQQTALHLAVERQHTQIVRLLVRAGAKLDI), and 698 to 729 (DGDTPLHEALRHHTLSQLRQLQDMQDVGKVDA). 2 RING-type zinc fingers span residues 819–854 (CMVCSDMKRDTLFGPCGHIATCSLCSPRVKKCLICK) and 866–901 (CVVCSDKKAAVLFQPCGHMCACENCASLMKKCVQCR). The stretch at 935–962 (QKDKDNTNVNADVQKLQQQLQDIKEQTM) forms a coiled coil. The segment at 963 to 996 (CPVCLDRLKNMIFLCGHGTCQLCGDRMSECPICR) adopts an RING-type 3 zinc-finger fold.

In terms of assembly, interacts with CEP131 and PCM1. Post-translationally, ubiquitinated; this modification is inhibited in response to cellular stress, such as ultraviolet light (UV) radiation or heat shock. Ubiquitinated; possibly via autoubiquitination. As to expression, detected in all tissues tested. Present in embryo, embryonic stem cells, bladder, skeletal muscle, bladder, uterus, testis, stomach, colon, ileum, trachea, lung, aorta, kidney, spleen, liver and vas deferens (at protein level). Highly expressed in testis.

It localises to the cytoplasm. Its subcellular location is the cytoskeleton. The protein resides in the microtubule organizing center. It is found in the centrosome. The protein localises to the centriolar satellite. It localises to the cell membrane. The catalysed reaction is S-ubiquitinyl-[E2 ubiquitin-conjugating enzyme]-L-cysteine + [acceptor protein]-L-lysine = [E2 ubiquitin-conjugating enzyme]-L-cysteine + N(6)-ubiquitinyl-[acceptor protein]-L-lysine.. The protein operates within protein modification; protein ubiquitination. In terms of biological role, E3 ubiquitin-protein ligase that mediates ubiquitination of Delta receptors, which act as ligands of Notch proteins. Positively regulates the Delta-mediated Notch signaling by ubiquitinating the intracellular domain of Delta, leading to endocytosis of Delta receptors. Involved in ubiquitination of centriolar satellite CEP131, CEP290 and PCM1 proteins and hence inhibits primary cilium formation in proliferating cells. Mediates 'Lys-63'-linked polyubiquitination of TBK1, which probably participates in kinase activation. Probably mediates ubiquitination and subsequent proteasomal degradation of DAPK1, thereby antagonizing anti-apoptotic effects of DAPK1 to promote TNF-induced apoptosis. The sequence is that of E3 ubiquitin-protein ligase MIB1 (Mib1) from Mus musculus (Mouse).